A 578-amino-acid chain; its full sequence is Putative ankyrin repeat protein FPV022 (578 aa).

ANK repeat units lie at residues 4-34 (RRKS…DLNK), 38-67 (KNRT…KMSA), 68-97 (CKVP…SVDV), 100-129 (KGET…SGPY), 160-189 (YGHT…ITDN), 222-251 (EGTT…DPKV), 255-287 (HSVS…MVNM), 320-349 (YLSE…NINK), 353-382 (YGNI…DVNA), 386-415 (DGNT…DINS), and 419-449 (NGRT…KKNK).

The protein is Putative ankyrin repeat protein FPV022 of Fowlpox virus (strain NVSL) (FPV).